Consider the following 645-residue polypeptide: Crossover junction endonuclease mus-81 (645 aa).

2 disordered regions span residues 98 to 119 (LAAA…RTAR) and 219 to 310 (GVAG…EDRK). Polar residues predominate over residues 223-252 (SANTSRNAIASGSGTSNPNRSENVNPNRQD). Over residues 296-305 (DSDDEDPKYD) the composition is skewed to acidic residues. Residues 353 to 459 (ELVLDTREVQ…NVVYIIENYN (107 aa)) form the ERCC4 domain.

This sequence belongs to the XPF family. As to quaternary structure, interacts with eme-1. It depends on Mg(2+) as a cofactor.

The protein localises to the nucleus. Its function is as follows. Interacts with eme-1 to form a DNA structure-specific endonuclease with substrate preference for branched DNA structures with a 5'-end at the branch nick. Typical substrates include 3'-flap structures, D-loops, replication forks and nicked Holliday junctions. May be required in mitosis for the processing of stalled or collapsed replication fork intermediates. May be required in meiosis for the repair of meiosis-specific double strand breaks subsequent to single-end invasion (SEI). This chain is Crossover junction endonuclease mus-81 (mus-81), found in Neurospora crassa (strain ATCC 24698 / 74-OR23-1A / CBS 708.71 / DSM 1257 / FGSC 987).